Reading from the N-terminus, the 384-residue chain is Sphingosine 1-phosphate receptor 3 (384 aa).

Residues 1–34 are Extracellular-facing; sequence MMINPLIYLHYNYTGKLDHRPTVGTSPGTRDPKT. Residue asparagine 12 is glycosylated (N-linked (GlcNAc...) asparagine). A helical membrane pass occupies residues 35–55; it reads IAFLVVCSFIILENLTVLLAI. Over 56–64 the chain is Cytoplasmic; sequence WKNHRFHNR. Residues 65 to 85 traverse the membrane as a helical segment; it reads MYFFIGNLALCDLLASVAYLV. Residues 86–105 are Extracellular-facing; the sequence is NLLLSGEKTLQLSPVLWFVR. Residues 106–126 form a helical membrane-spanning segment; that stretch reads EGSMFVTLGASIFSLLAIAIE. Residues 127-144 are Cytoplasmic-facing; that stretch reads RHLTMIKMRPYDASKNYR. Residues 145 to 165 traverse the membrane as a helical segment; that stretch reads VFLLIGTCWLVAVLLGALPIL. At 166 to 186 the chain is on the extracellular side; that stretch reads GWNCLGNLPDCSTILPLYTKK. The chain crosses the membrane as a helical span at residues 187-207; it reads YVAFCIIVFIVLLLAMSVLYA. Topologically, residues 208–235 are cytoplasmic; sequence RIYILVKSSSQKVSKHRNSEHAMSLLRT. A helical membrane pass occupies residues 236-256; the sequence is VIIVVGVFIACWMPIFVLLLL. Residues 257 to 271 lie on the Extracellular side of the membrane; that stretch reads DVACERPCPILYKAD. A helical transmembrane segment spans residues 272–292; sequence WFIAVAVLNSAMNPIIYTLAS. Residues 293–384 are Cytoplasmic-facing; the sequence is REMRRAFLGL…REGEGGNGGR (92 aa). 2 stretches are compositionally biased toward polar residues: residues 315-325 and 336-347; these read NDSGNKQFQEP and QTHPNQSQQSSR. A disordered region spans residues 315-384; sequence NDSGNKQFQE…REGEGGNGGR (70 aa). A compositionally biased stretch (basic and acidic residues) spans 349–359; sequence AELDREQETGH.

Belongs to the G-protein coupled receptor 1 family.

It is found in the cell membrane. Functionally, receptor for the lysosphingolipid sphingosine 1-phosphate (S1P). This is Sphingosine 1-phosphate receptor 3 (s1pr3) from Takifugu rubripes (Japanese pufferfish).